Reading from the N-terminus, the 150-residue chain is Large ribosomal subunit protein bL9 (150 aa).

Belongs to the bacterial ribosomal protein bL9 family.

In terms of biological role, binds to the 23S rRNA. This is Large ribosomal subunit protein bL9 from Corynebacterium jeikeium (strain K411).